The following is a 641-amino-acid chain: Protein GAMETE EXPRESSED 3 (641 aa).

A signal peptide spans 1–29; it reads MVAFRFVYIPLPFFFFFFFFFVFFSGVSQ. The helical transmembrane segment at 441–461 threads the bilayer; sequence IIWFLLFEFVIMVLFAALVRF. Residues 570–627 are disordered; the sequence is ITIFQTPSDESSSEESYRDEHYDDVADDEHDEDDLDRKQKGKLLAHSEGSSNDGDGIA. Basic and acidic residues predominate over residues 584–593; it reads ESYRDEHYDD. Residues 594-603 are compositionally biased toward acidic residues; sequence VADDEHDEDD.

Expressed in mature siliques and in pollen, mainly in the sperm cells. Detected in the egg cell within the female gametophyte.

The protein resides in the cell membrane. Functionally, required for micropylar pollen tube guidance. Plays a role during early embryo patterning. This is Protein GAMETE EXPRESSED 3 (GEX3) from Arabidopsis thaliana (Mouse-ear cress).